The primary structure comprises 447 residues: Blue-light photoreceptor PHR2 (447 aa).

Residues 1-14 show a composition bias toward polar residues; it reads MDSSNVEENLNPET. The disordered stretch occupies residues 1–20; the sequence is MDSSNVEENLNPETKSAEEQ. Residues 115-249 form the Photolyase/cryptochrome alpha/beta domain; it reads RAAVVWFRND…EVKYFWGSTL (135 aa).

The protein belongs to the DNA photolyase class-1 family. It depends on FAD as a cofactor.

The chain is Blue-light photoreceptor PHR2 (PHR2) from Arabidopsis thaliana (Mouse-ear cress).